Here is a 441-residue protein sequence, read N- to C-terminus: Xylose isomerase (441 aa).

Residues histidine 100 and aspartate 103 contribute to the active site. 7 residues coordinate Mg(2+): glutamate 231, glutamate 267, histidine 270, aspartate 295, aspartate 306, aspartate 308, and aspartate 338.

Belongs to the xylose isomerase family. Homotetramer. It depends on Mg(2+) as a cofactor.

The protein resides in the cytoplasm. It catalyses the reaction alpha-D-xylose = alpha-D-xylulofuranose. In Paraburkholderia phymatum (strain DSM 17167 / CIP 108236 / LMG 21445 / STM815) (Burkholderia phymatum), this protein is Xylose isomerase.